Consider the following 556-residue polypeptide: 2,3-bisphosphoglycerate-independent phosphoglycerate mutase (556 aa).

Mn(2+)-binding residues include D25 and S78. Residue S78 is the Phosphoserine intermediate of the active site. Residues H137, 167–168, R203, R210, 283–286, and K358 contribute to the substrate site; these read RD and RADR. The Mn(2+) site is built by D427, H431, D468, H469, and H498.

This sequence belongs to the BPG-independent phosphoglycerate mutase family. Monomer. Requires Mn(2+) as cofactor. In terms of tissue distribution, found ubiquitously in germinating seed.

Its subcellular location is the cytoplasm. The enzyme catalyses (2R)-2-phosphoglycerate = (2R)-3-phosphoglycerate. It participates in carbohydrate degradation; glycolysis; pyruvate from D-glyceraldehyde 3-phosphate: step 3/5. In terms of biological role, catalyzes the interconversion of 2-phosphoglycerate and 3-phosphoglycerate. The polypeptide is 2,3-bisphosphoglycerate-independent phosphoglycerate mutase (Ricinus communis (Castor bean)).